Reading from the N-terminus, the 546-residue chain is Chaperonin GroEL (546 aa).

ATP-binding positions include 30–33, lysine 51, 87–91, glycine 415, 479–481, and aspartate 495; these read TLGP, DGTTT, and NAA.

The protein belongs to the chaperonin (HSP60) family. Forms a cylinder of 14 subunits composed of two heptameric rings stacked back-to-back. Interacts with the co-chaperonin GroES.

The protein localises to the cytoplasm. It catalyses the reaction ATP + H2O + a folded polypeptide = ADP + phosphate + an unfolded polypeptide.. Together with its co-chaperonin GroES, plays an essential role in assisting protein folding. The GroEL-GroES system forms a nano-cage that allows encapsulation of the non-native substrate proteins and provides a physical environment optimized to promote and accelerate protein folding. The protein is Chaperonin GroEL of Allochromatium vinosum (Chromatium vinosum).